The chain runs to 156 residues: Cyanate hydratase (156 aa).

Catalysis depends on residues Arg-96, Glu-99, and Ser-122.

Belongs to the cyanase family.

The catalysed reaction is cyanate + hydrogencarbonate + 3 H(+) = NH4(+) + 2 CO2. In terms of biological role, catalyzes the reaction of cyanate with bicarbonate to produce ammonia and carbon dioxide. The sequence is that of Cyanate hydratase from Burkholderia pseudomallei (strain 1106a).